A 287-amino-acid chain; its full sequence is Putative inactive carboxylesterase 4 (287 aa).

Residues M1–A18 form the signal peptide. N80 carries N-linked (GlcNAc...) asparagine glycosylation.

This sequence belongs to the type-B carboxylesterase/lipase family. Expressed in placenta.

It localises to the secreted. Functionally, has no esterase activity. The chain is Putative inactive carboxylesterase 4 (CES1P1) from Homo sapiens (Human).